The sequence spans 95 residues: RING finger protein Z (95 aa).

Residue G2 is the site of N-myristoyl glycine; by host attachment. Residues 38-74 (CKSCWFANKGLIKCSNHYLCLKCLTAMLSRSDYCGIC) form an RING-type; atypical zinc finger. The PTAP/PSAP motif motif lies at 88–91 (PSAP).

Belongs to the arenaviridae Z protein family. Interacts with protein NP; this interaction probably directs the encapsidated genome to budding sites. Interacts (via RING domain) with polymerase L; this interaction inhibits viral transcription and replication, Z partially blocks the product exit tunnel for the releasing nascent RNA product. Interacts with the glycoprotein complex; this interaction plays a role in virion budding. Interacts with host eIF4E; this interaction results in eIF4E reduced affinity for its substrate, the 5'-m7 G cap structure. Interacts (via late-budding domain) with host TSG101; this interaction is essential for budding and release of viral particles. Interacts with host RPLP0; this interaction may serve to load ribosome-like particles inside the virion. Interacts with host PML; this interaction induces PML bodies redistribution in the cytoplasm upon viral infection. In terms of processing, myristoylation is required for the role of RING finger protein Z in assembly and budding.

It localises to the virion. The protein localises to the host cytoplasm. Its subcellular location is the host perinuclear region. The protein resides in the host cell membrane. Functionally, plays a crucial role in virion assembly and budding. Expressed late in the virus life cycle, it acts as an inhibitor of viral transcription and RNA synthesis by interacting with the viral polymerase L. Presumably recruits the NP encapsidated genome to cellular membranes at budding sites via direct interaction with NP. Plays critical roles in the final steps of viral release by interacting with host TSG101, a member of the vacuolar protein-sorting pathway and using other cellular host proteins involved in vesicle formation pathway. The budding of the virus progeny occurs after association of protein Z with the viral glycoprotein complex SSP-GP1-GP2 at the cell periphery, step that requires myristoylation of protein Z. Also selectively represses protein production by associating with host eIF4E. In cell-based minigenome assay, has an inhibitory effect on the ribonucleoprotein machinery (vRNP), which is responsible for the replication and transcription of the viral genome. In Bear Canyon mammarenavirus (isolate Mouse/United States/AV A0070039/2000) (BCNV), this protein is RING finger protein Z.